Consider the following 677-residue polypeptide: DNA gyrase subunit B, novobiocin-resistant (677 aa).

Residues 1–23 form a disordered region; sequence MTTYDTRTATDTRGSEQPGHVGT. The segment at 154-295 is novobiocin-binding; it reads IWTDGHRWTQ…RLLSAEIALQ (142 aa). The region spanning 456–570 is the Toprim domain; it reads SEIFIVEGDS…EGHVHLSRPP (115 aa). Residues glutamate 462, aspartate 535, and aspartate 537 each contribute to the Mg(2+) site.

This sequence belongs to the type II topoisomerase GyrB family. As to quaternary structure, heterotetramer, composed of two GyrA and two GyrB chains. In the heterotetramer, GyrA contains the active site tyrosine that forms a transient covalent intermediate with DNA, while GyrB binds cofactors and catalyzes ATP hydrolysis. It depends on Mg(2+) as a cofactor. The cofactor is Mn(2+). Ca(2+) is required as a cofactor.

The protein resides in the cytoplasm. The catalysed reaction is ATP-dependent breakage, passage and rejoining of double-stranded DNA.. In terms of biological role, a type II topoisomerase that negatively supercoils closed circular double-stranded (ds) DNA in an ATP-dependent manner to modulate DNA topology and maintain chromosomes in an underwound state. Negative supercoiling favors strand separation, and DNA replication, transcription, recombination and repair, all of which involve strand separation. Also able to catalyze the interconversion of other topological isomers of dsDNA rings, including catenanes and knotted rings. Type II topoisomerases break and join 2 DNA strands simultaneously in an ATP-dependent manner. This Streptomyces niveus (Streptomyces spheroides) protein is DNA gyrase subunit B, novobiocin-resistant.